The primary structure comprises 315 residues: MAQFQIECVESNTEESRNHYSKFILEPLERGQGTTVGNALRRVLLSNLEGTAVTAVRIAGVSHEFATVPGVREDVLEIIMRMKEVILKSYSSQAQIGRLLVNGPTTITASHFDLPSEVEVIDPTQYVATIAEGGKLEMEFRIERGKGYRTVERGREEATSLDFLQIDSIFMPVRKVNYSVEEVRADGSIPKDRLLLEVWTNGSISPQEALSSAAGILVDLFNPLKDISLEPTDTNSDIPDDPTAQIPIEELQLSVRAYNCLKRAQVNSVADLLDYTQEDLLEIKNFGQKSAEEVVEALQRRLGITLPQERSSKHN.

The segment at 1–228 is alpha N-terminal domain (alpha-NTD); it reads MAQFQIECVE…DLFNPLKDIS (228 aa). The tract at residues 243–315 is alpha C-terminal domain (alpha-CTD); it reads TAQIPIEELQ…LPQERSSKHN (73 aa).

It belongs to the RNA polymerase alpha chain family. In terms of assembly, homodimer. In cyanobacteria the RNAP catalytic core is composed of 2 alpha, 1 beta, 1 beta', 1 gamma and 1 omega subunit. When a sigma factor is associated with the core the holoenzyme is formed, which can initiate transcription.

The enzyme catalyses RNA(n) + a ribonucleoside 5'-triphosphate = RNA(n+1) + diphosphate. In terms of biological role, DNA-dependent RNA polymerase catalyzes the transcription of DNA into RNA using the four ribonucleoside triphosphates as substrates. The sequence is that of DNA-directed RNA polymerase subunit alpha from Nostoc sp. (strain PCC 7120 / SAG 25.82 / UTEX 2576).